A 91-amino-acid chain; its full sequence is Small ribosomal subunit protein uS19 (91 aa).

The protein belongs to the universal ribosomal protein uS19 family.

Functionally, protein S19 forms a complex with S13 that binds strongly to the 16S ribosomal RNA. In Prochlorococcus marinus (strain SARG / CCMP1375 / SS120), this protein is Small ribosomal subunit protein uS19.